Here is a 441-residue protein sequence, read N- to C-terminus: N-acetylmuramyl-L-alanine amidase (441 aa).

Residues 1 to 25 form the signal peptide; that stretch reads MKTKTLFIFSAILTLSIFAPNETFA.

Belongs to the peptidase S12 family.

The enzyme catalyses Hydrolyzes the link between N-acetylmuramoyl residues and L-amino acid residues in certain cell-wall glycopeptides.. Its pathway is cell wall biogenesis; peptidoglycan recycling. In terms of biological role, involved in muropeptide recycling. Hydrolyzes the amide bond between N-acetylmuramic acid (MurNAc) and the L-alanine residue of the stem peptide. Cannot hydrolyze muropeptides containing N-acetylglucosamine (GlcNAc) at the non-reducing end. The sequence is that of N-acetylmuramyl-L-alanine amidase from Bacillus subtilis (strain 168).